Here is a 60-residue protein sequence, read N- to C-terminus: Large ribosomal subunit protein uL30 (60 aa).

This sequence belongs to the universal ribosomal protein uL30 family. As to quaternary structure, part of the 50S ribosomal subunit.

In Baumannia cicadellinicola subsp. Homalodisca coagulata, this protein is Large ribosomal subunit protein uL30.